Here is a 301-residue protein sequence, read N- to C-terminus: Mitochondrial substrate carrier family protein X (301 aa).

Topologically, residues 1 to 23 (MVQQQQQQQQIKKNQVKPPLYSN) are mitochondrial intermembrane. Solcar repeat units follow at residues 18 to 109 (PPLY…FRTR), 117 to 199 (IKLW…MKHN), and 208 to 296 (IGLP…QKSF). A helical membrane pass occupies residues 24–44 (LIAGAIAGVIGSSVVFPLDFV). Residues 45-75 (KTRLQQQRVSIDGSKQYNGIIDCFKKVIKNE) are Mitochondrial matrix-facing. A helical membrane pass occupies residues 76 to 97 (GGVRGLYRGLSSNLIGIIPEKA). The Mitochondrial intermembrane segment spans residues 98 to 122 (LKLAMNDYFRTRFQGDRSYIKLWEE). The chain crosses the membrane as a helical span at residues 123 to 143 (VASGGLAGMCQVVATNPMELV). Over 144 to 173 (KIRMQVSGLSGKKASLKEVVSELGIKGLYK) the chain is Mitochondrial matrix. A helical transmembrane segment spans residues 174–194 (GTASTLLRDVPFSMIYFSIYG). Residues 195 to 207 (RMKHNLTDQETGE) lie on the Mitochondrial intermembrane side of the membrane. The chain crosses the membrane as a helical span at residues 208 to 228 (IGLPKILLCGITAGSIAASVS). Topologically, residues 229–271 (TPFDVIKTRIQVKPGPNDPHYKGIADCFRKTIQSEGPKALFKG) are mitochondrial matrix. The chain crosses the membrane as a helical span at residues 272–292 (VLPRVCIISPLFGITLVVYEI). Residues 293 to 301 (QKSFYASTH) are Mitochondrial intermembrane-facing.

The protein belongs to the mitochondrial carrier (TC 2.A.29) family.

The protein localises to the mitochondrion inner membrane. Mitochondrial solute carriers shuttle metabolites, nucleotides, and cofactors through the mitochondrial inner membrane. In Dictyostelium discoideum (Social amoeba), this protein is Mitochondrial substrate carrier family protein X (mcfX).